We begin with the raw amino-acid sequence, 320 residues long: rRNA methyltransferase 2, mitochondrial (320 aa).

Residues 1–18 constitute a mitochondrion transit peptide; that stretch reads MILVYNRIRSIISSSLGR. S-adenosyl-L-methionine contacts are provided by residues 83–86, Asp-104, 178–179, and Asp-203; these read PGAW and DI. Catalysis depends on Lys-264, which acts as the Proton acceptor.

Belongs to the class I-like SAM-binding methyltransferase superfamily. RNA methyltransferase RlmE family.

It localises to the mitochondrion. It carries out the reaction uridine(2791) in 21S rRNA + S-adenosyl-L-methionine = 2'-O-methyluridine(2791) in 21S rRNA + S-adenosyl-L-homocysteine + H(+). In terms of biological role, S-adenosyl-L-methionine-dependent 2'-O-ribose methyltransferase that catalyzes the formation of 2'-O-methyluridine at position 2791 (Um2791) in the 21S mitochondrial large subunit ribosomal RNA (mtLSU rRNA), a universally conserved modification in the peptidyl transferase domain of the mtLSU rRNA. The chain is rRNA methyltransferase 2, mitochondrial from Saccharomyces cerevisiae (strain ATCC 204508 / S288c) (Baker's yeast).